The chain runs to 182 residues: Alkyl hydroperoxide reductase AhpD (182 aa).

Residue Cys-132 is the Proton donor of the active site. Cys-132 and Cys-135 are disulfide-bonded. The active-site Cysteine sulfenic acid (-SOH) intermediate is Cys-135.

This sequence belongs to the AhpD family.

The enzyme catalyses N(6)-[(R)-dihydrolipoyl]-L-lysyl-[lipoyl-carrier protein] + a hydroperoxide = N(6)-[(R)-lipoyl]-L-lysyl-[lipoyl-carrier protein] + an alcohol + H2O. Antioxidant protein with alkyl hydroperoxidase activity. Required for the reduction of the AhpC active site cysteine residues and for the regeneration of the AhpC enzyme activity. The chain is Alkyl hydroperoxide reductase AhpD from Bradyrhizobium diazoefficiens (strain JCM 10833 / BCRC 13528 / IAM 13628 / NBRC 14792 / USDA 110).